Here is a 53-residue protein sequence, read N- to C-terminus: UPF0181 protein VC_A0569 (53 aa).

Belongs to the UPF0181 family.

In Vibrio cholerae serotype O1 (strain ATCC 39315 / El Tor Inaba N16961), this protein is UPF0181 protein VC_A0569.